The sequence spans 321 residues: tRNA uridine(34) hydroxylase (321 aa).

A Rhodanese domain is found at 123-217 (SDPDVTVIDT…YLEEVPEGNS (95 aa)). Cys-177 acts as the Cysteine persulfide intermediate in catalysis. A compositionally biased stretch (basic and acidic residues) spans 294-308 (RKGELHIGDRADIAK). Positions 294 to 321 (RKGELHIGDRADIAKSRTTQGAPSADGE) are disordered.

Belongs to the TrhO family.

It carries out the reaction uridine(34) in tRNA + AH2 + O2 = 5-hydroxyuridine(34) in tRNA + A + H2O. Its function is as follows. Catalyzes oxygen-dependent 5-hydroxyuridine (ho5U) modification at position 34 in tRNAs. This is tRNA uridine(34) hydroxylase from Teredinibacter turnerae (strain ATCC 39867 / T7901).